A 365-amino-acid chain; its full sequence is Outer membrane protein assembly factor BamC (365 aa).

The signal sequence occupies residues 1 to 16 (MLKKVTPLFLVAAVAA). The N-palmitoyl cysteine moiety is linked to residue Cys17. The S-diacylglycerol cysteine moiety is linked to residue Cys17.

This sequence belongs to the BamC family. As to quaternary structure, part of the Bam complex.

The protein resides in the cell outer membrane. In terms of biological role, part of the outer membrane protein assembly complex, which is involved in assembly and insertion of beta-barrel proteins into the outer membrane. The protein is Outer membrane protein assembly factor BamC of Shewanella oneidensis (strain ATCC 700550 / JCM 31522 / CIP 106686 / LMG 19005 / NCIMB 14063 / MR-1).